A 77-amino-acid chain; its full sequence is Bradykinin-potentiating peptide (77 aa).

Positions methionine 1–serine 22 are cleaved as a signal peptide. Residues arginine 74–arginine 77 constitute a propeptide that is removed on maturation.

Belongs to the non-disulfide-bridged peptide (NDBP) superfamily. Long chain multifunctional peptide (group 2) family. As to expression, expressed by the venom gland.

It is found in the secreted. In terms of biological role, antimicrobial peptide. May also inhibit angiotensin-converting enzyme (ACE) and potentiate bradykinin (BK). This Tityus discrepans (Venezuelan scorpion) protein is Bradykinin-potentiating peptide.